The chain runs to 214 residues: Glycine-rich protein 2 (214 aa).

The 68-residue stretch at 8 to 75 (RAKGTVKWFS…RTKAVDVTGP (68 aa)) folds into the CSD domain. Residues 54-91 (TVEFEVESGGDGRTKAVDVTGPDGAAVQGGRGGGGGGG) are disordered. Positions 80–91 (VQGGRGGGGGGG) are enriched in gly residues. 2 CCHC-type zinc fingers span residues 157–174 (SGCFKCGESGHFARDCSQ) and 194–211 (GGCYKCGEDGHFARECTS).

This chain is Glycine-rich protein 2 (GRP-2), found in Nicotiana sylvestris (Wood tobacco).